The sequence spans 597 residues: Elongation factor 4 (597 aa).

Positions 2-184 constitute a tr-type G domain; sequence DHIRNFSIIA…ALIAKVPPPK (183 aa). Residues 14 to 19 and 131 to 134 contribute to the GTP site; these read DHGKST and NKID.

It belongs to the TRAFAC class translation factor GTPase superfamily. Classic translation factor GTPase family. LepA subfamily.

It localises to the cell inner membrane. The enzyme catalyses GTP + H2O = GDP + phosphate + H(+). Its function is as follows. Required for accurate and efficient protein synthesis under certain stress conditions. May act as a fidelity factor of the translation reaction, by catalyzing a one-codon backward translocation of tRNAs on improperly translocated ribosomes. Back-translocation proceeds from a post-translocation (POST) complex to a pre-translocation (PRE) complex, thus giving elongation factor G a second chance to translocate the tRNAs correctly. Binds to ribosomes in a GTP-dependent manner. This Paraburkholderia phymatum (strain DSM 17167 / CIP 108236 / LMG 21445 / STM815) (Burkholderia phymatum) protein is Elongation factor 4.